Consider the following 321-residue polypeptide: Transcription factor ATOH8 (321 aa).

Disordered regions lie at residues 59-193 and 203-222; these read GLRD…SSYS and HQDSSASPRKRPGEATAASS. Positions 70–85 are enriched in pro residues; it reads VPVPVPVPVPVAPAVP. Positions 93–109 are enriched in basic and acidic residues; that stretch reads AGERGGSRAPEVSDARK. Over residues 121-132 the composition is skewed to pro residues; that stretch reads LPTPPPPPPPAP. Positions 133-143 are enriched in low complexity; it reads QSQAPGGPEAQ. Pro residues predominate over residues 160–186; the sequence is PARPAPSAPPAPPAPPESTVRPAPPTR. The basic motif; degenerate stretch occupies residues 230–243; the sequence is TRRLLANARERTRV. The bHLH domain occupies 230-282; it reads TRRLLANARERTRVHTISAAFEALRKQVPCYSYGQKLSKLAILRIACNYILSL. Residues 244–282 form a helix-loop-helix motif region; the sequence is HTISAAFEALRKQVPCYSYGQKLSKLAILRIACNYILSL.

Efficient DNA binding requires dimerization with another bHLH protein. Interacts with NEUROG3 and NEUROD1. Interacts with ZFPM2; mediates indirect interaction with GATA4. Forms a heterodimer with TCF3; repress transcription of TCF3 and TCF3/NEUROG3 dimer-induced transactivation of E box-dependent promoters. In terms of tissue distribution, expressed in lung, liver, kidney, heart and pancreas. Expressed in endothel of umbilical vessels.

It is found in the nucleus. The protein resides in the nucleus speckle. It localises to the cytoplasm. Transcription factor that binds a palindromic (canonical) core consensus DNA sequence 5'-CANNTG- 3' known as an E-box element, possibly as a heterodimer with other bHLH proteins. Regulates endothelial cell proliferation, migration and tube-like structures formation. Modulates endothelial cell differentiation through NOS3. May be implicated in specification and differentiation of neuronal cell lineages in the brain. May participate in kidney development and may be involved in podocyte differentiation. During early embryonic development is involved in tissue-specific differentiation processes that are dependent on class II bHLH factors and namely modulates the differentiation program initiated by the pro-endocrine factor NEUROG3. During myogenesis, may play a role during the transition of myoblasts from the proliferative phase to the differentiation phase. Positively regulates HAMP transcription in two ways, firstly by acting directly on the HAMP promoter via E-boxes binding and indirectly through increased phosphorylation of SMAD protein complex. Repress NEUROG3-dependent gene activation in a gene-specific manner through at least two mechanisms; requires only either the sequestering of a general partner such as TCF3 through heterodimerization, either also requires binding of the bHLH domain to DNA via a basic motif. In Homo sapiens (Human), this protein is Transcription factor ATOH8.